Consider the following 854-residue polypeptide: Envelope glycoprotein gp160 (854 aa).

The first 31 residues, 1-31 (MKVMEKKKRDWNSLSIITIITIILLTPCLTS), serve as a signal peptide directing secretion. Over 32 to 675 (ELWVTVYYGV…ITKWLWYIKI (644 aa)) the chain is Extracellular. Cystine bridges form between cysteine 53–cysteine 73, cysteine 118–cysteine 203, cysteine 125–cysteine 194, cysteine 130–cysteine 155, cysteine 216–cysteine 245, and cysteine 226–cysteine 237. A V1 region spans residues 130–154 (CSKANFSQAKNLTNQTSSPPLEMKN). 7 N-linked (GlcNAc...) asparagine; by host glycosylation sites follow: asparagine 134, asparagine 140, asparagine 143, asparagine 154, asparagine 158, asparagine 186, and asparagine 195. Positions 155 to 194 (CSFNVTTELRDKKKQVYSLFYVEDVVNLGNENNTYRIINC) are V2. Residues asparagine 239, asparagine 260, asparagine 267, asparagine 274, asparagine 299, asparagine 331, asparagine 336, asparagine 351, and asparagine 356 are each glycosylated (N-linked (GlcNAc...) asparagine; by host). The V3 stretch occupies residues 294–327 (CHRPGNNTRGEVQIGPGMTFYNIENVVGDTRSAY). Cysteine 294 and cysteine 328 are joined by a disulfide. The interval 362-372 (ASGGDPEVTHH) is CD4-binding loop. Intrachain disulfides connect cysteine 376/cysteine 429 and cysteine 383/cysteine 402. The interval 383 to 402 (CNTSQIFTDNITNGIIILPC) is V4. Residues asparagine 384, asparagine 392, asparagine 426, asparagine 432, asparagine 446, and asparagine 450 are each glycosylated (N-linked (GlcNAc...) asparagine; by host). 2 V5 regions span residues 445-456 (TNNSGNLTFRPT) and 447-456 (NSGNLTFRPT). Residues 501–522 (AAFGLGALFLGFLGAAGSTMGA) form a fusion peptide region. The segment at 564 to 582 (KQLQARLLAVERYLQDQQI) is immunosuppression. Cysteine 588 and cysteine 594 are oxidised to a cystine. 4 N-linked (GlcNAc...) asparagine; by host glycosylation sites follow: asparagine 601, asparagine 608, asparagine 616, and asparagine 628. Residues 624–658 (KLVSNYTGKIFGLLEEAQSQQEKNERDLLELDQWA) adopt a coiled-coil conformation. The MPER; binding to GalCer stretch occupies residues 653–674 (ELDQWASLWNWFDITKWLWYIK). Residues 676-696 (FLMAVGGIIGLRIIMTVFSVV) form a helical membrane-spanning segment. Topologically, residues 697–854 (RRVRQGYSPL…IRQGLERALL (158 aa)) are cytoplasmic. The YXXL motif; contains endocytosis signal signature appears at 703–706 (YSPL). A Di-leucine internalization motif motif is present at residues 853–854 (LL).

Belongs to the HIV-1 env protein family. The mature envelope protein (Env) consists of a homotrimer of non-covalently associated gp120-gp41 heterodimers. The resulting complex protrudes from the virus surface as a spike. There seems to be as few as 10 spikes on the average virion. Interacts with host CD4, CCR5 and CXCR4. Gp120 also interacts with the C-type lectins CD209/DC-SIGN and CLEC4M/DC-SIGNR (collectively referred to as DC-SIGN(R)). Gp120 and gp41 interact with GalCer. Gp120 interacts with host ITGA4/ITGB7 complex; on CD4+ T-cells, this interaction results in rapid activation of integrin ITGAL/LFA-1, which facilitates efficient cell-to-cell spreading of HIV-1. Gp120 interacts with cell-associated heparan sulfate; this interaction increases virus infectivity on permissive cells and may be involved in infection of CD4- cells. In terms of assembly, the mature envelope protein (Env) consists of a homotrimer of non-covalently associated gp120-gp41 heterodimers. The resulting complex protrudes from the virus surface as a spike. There seems to be as few as 10 spikes on the average virion. Post-translationally, highly glycosylated by host. The high number of glycan on the protein is reffered to as 'glycan shield' because it contributes to hide protein sequence from adaptive immune system. Palmitoylation of the transmembrane protein and of Env polyprotein (prior to its proteolytic cleavage) is essential for their association with host cell membrane lipid rafts. Palmitoylation is therefore required for envelope trafficking to classical lipid rafts, but not for viral replication. In terms of processing, specific enzymatic cleavages in vivo yield mature proteins. Envelope glycoproteins are synthesized as an inactive precursor that is heavily N-glycosylated and processed likely by host cell furin in the Golgi to yield the mature SU and TM proteins. The cleavage site between SU and TM requires the minimal sequence [KR]-X-[KR]-R. About 2 of the 9 disulfide bonds of gp41 are reduced by P4HB/PDI, following binding to CD4 receptor.

It localises to the virion membrane. It is found in the host cell membrane. Its subcellular location is the host endosome membrane. Attaches the virus to the host lymphoid cell by binding to the primary receptor CD4. This interaction induces a structural rearrangement creating a high affinity binding site for a chemokine coreceptor like CXCR4 and/or CCR5. Acts as a ligand for CD209/DC-SIGN and CLEC4M/DC-SIGNR, which are respectively found on dendritic cells (DCs), and on endothelial cells of liver sinusoids and lymph node sinuses. These interactions allow capture of viral particles at mucosal surfaces by these cells and subsequent transmission to permissive cells. HIV subverts the migration properties of dendritic cells to gain access to CD4+ T-cells in lymph nodes. Virus transmission to permissive T-cells occurs either in trans (without DCs infection, through viral capture and transmission), or in cis (following DCs productive infection, through the usual CD4-gp120 interaction), thereby inducing a robust infection. In trans infection, bound virions remain infectious over days and it is proposed that they are not degraded, but protected in non-lysosomal acidic organelles within the DCs close to the cell membrane thus contributing to the viral infectious potential during DCs' migration from the periphery to the lymphoid tissues. On arrival at lymphoid tissues, intact virions recycle back to DCs' cell surface allowing virus transmission to CD4+ T-cells. Its function is as follows. Acts as a class I viral fusion protein. Under the current model, the protein has at least 3 conformational states: pre-fusion native state, pre-hairpin intermediate state, and post-fusion hairpin state. During fusion of viral and target intracellular membranes, the coiled coil regions (heptad repeats) assume a trimer-of-hairpins structure, positioning the fusion peptide in close proximity to the C-terminal region of the ectodomain. The formation of this structure appears to drive apposition and subsequent fusion of viral and target cell membranes. Complete fusion occurs in host cell endosomes and is dynamin-dependent, however some lipid transfer might occur at the plasma membrane. The virus undergoes clathrin-dependent internalization long before endosomal fusion, thus minimizing the surface exposure of conserved viral epitopes during fusion and reducing the efficacy of inhibitors targeting these epitopes. Membranes fusion leads to delivery of the nucleocapsid into the cytoplasm. Functionally, oligomerizes in the host endoplasmic reticulum into predominantly trimers. In a second time, gp160 transits in the host Golgi, where glycosylation is completed. The precursor is then proteolytically cleaved in the trans-Golgi and thereby activated by cellular furin or furin-like proteases to produce gp120 and gp41. The protein is Envelope glycoprotein gp160 of Pan (chimpanzees).